Consider the following 553-residue polypeptide: HTH-type transcriptional regulator SgrR (553 aa).

Positions 1-117 (MPSSRLQQQF…LSQIERRFRQ (117 aa)) constitute an HTH marR-type domain. The H-T-H motif DNA-binding region spans 26-49 (LQELANVLHCSKRHIRSLLNNMQK). The segment at 163–494 (EPEADLAHHW…NDLSKEVSQW (332 aa)) is solute-binding.

In terms of biological role, activates the small RNA gene sgrS under glucose-phosphate stress conditions as well as yfdZ. Represses its own transcription under both stress and non-stress conditions. Might act as a sensor of the intracellular accumulation of phosphoglucose by binding these molecules in its C-terminal solute-binding domain. This chain is HTH-type transcriptional regulator SgrR, found in Photorhabdus laumondii subsp. laumondii (strain DSM 15139 / CIP 105565 / TT01) (Photorhabdus luminescens subsp. laumondii).